The sequence spans 2883 residues: Bifunctional DNA-directed RNA polymerase subunit beta-beta' (2883 aa).

The DNA-directed RNA polymerase subunit beta stretch occupies residues Met-1 to Glu-1377. The DNA-directed RNA polymerase subunit beta' stretch occupies residues Pro-1382 to Ala-2883. Zn(2+) contacts are provided by Cys-1447, Cys-1449, Cys-1462, and Cys-1465. Residues Asp-1846, Asp-1848, and Asp-1850 each coordinate Mg(2+). Zn(2+)-binding residues include Cys-2176, Cys-2250, Cys-2257, and Cys-2260.

This sequence in the N-terminal section; belongs to the RNA polymerase beta chain family. The protein in the C-terminal section; belongs to the RNA polymerase beta' chain family. In terms of assembly, the RNAP catalytic core consists of 2 alpha, 1 beta/beta' and 1 omega subunit. When a sigma factor is associated with the core the holoenzyme is formed, which can initiate transcription. Mg(2+) is required as a cofactor. The cofactor is Zn(2+).

The enzyme catalyses RNA(n) + a ribonucleoside 5'-triphosphate = RNA(n+1) + diphosphate. In terms of biological role, DNA-dependent RNA polymerase catalyzes the transcription of DNA into RNA using the four ribonucleoside triphosphates as substrates. The protein is Bifunctional DNA-directed RNA polymerase subunit beta-beta' (rpoBC) of Wolinella succinogenes (strain ATCC 29543 / DSM 1740 / CCUG 13145 / JCM 31913 / LMG 7466 / NCTC 11488 / FDC 602W) (Vibrio succinogenes).